Consider the following 60-residue polypeptide: UPF0434 protein Aave_2563 (60 aa).

This sequence belongs to the UPF0434 family.

This is UPF0434 protein Aave_2563 from Paracidovorax citrulli (strain AAC00-1) (Acidovorax citrulli).